The following is a 294-amino-acid chain: Very long chain fatty acid elongase 5 (294 aa).

The next 7 helical transmembrane spans lie at 26-46, 64-84, 112-132, 141-161, 172-192, 207-227, and 231-251; these read WLLL…LLIV, ILVV…YELV, VLWW…FFIL, FLHI…MNWV, FNSF…IPAI, LVQF…PCGF, and WLYF…NFYI. The tract at residues 261 to 294 is disordered; sequence AKKDPRHNGIKSVNGHSNGASHTNAVKNRKARTD. Over residues 274-286 the composition is skewed to polar residues; the sequence is NGHSNGASHTNAV.

Belongs to the ELO family. ELOVL5 subfamily. In terms of tissue distribution, expression is highest in intestine, followed by brain and heart, and lowest in gill. Also expressed in liver, spleen and muscle.

The protein localises to the endoplasmic reticulum membrane. Its subcellular location is the cell projection. It is found in the dendrite. The enzyme catalyses a very-long-chain acyl-CoA + malonyl-CoA + H(+) = a very-long-chain 3-oxoacyl-CoA + CO2 + CoA. It catalyses the reaction (6Z,9Z,12Z)-octadecatrienoyl-CoA + malonyl-CoA + H(+) = (8Z,11Z,14Z)-3-oxoeicosatrienoyl-CoA + CO2 + CoA. The catalysed reaction is (9Z,12Z,15Z)-octadecatrienoyl-CoA + malonyl-CoA + H(+) = (11Z,14Z,17Z)-3-oxoeicosatrienoyl-CoA + CO2 + CoA. It carries out the reaction (9Z)-hexadecenoyl-CoA + malonyl-CoA + H(+) = 3-oxo-(11Z)-octadecenoyl-CoA + CO2 + CoA. The enzyme catalyses (9Z)-octadecenoyl-CoA + malonyl-CoA + H(+) = 3-oxo-(11Z)-eicosenoyl-CoA + CO2 + CoA. It catalyses the reaction (11Z)-octadecenoyl-CoA + malonyl-CoA + H(+) = 3-oxo-(13Z)-eicosenoyl-CoA + CO2 + CoA. The catalysed reaction is (9Z,12Z)-octadecadienoyl-CoA + malonyl-CoA + H(+) = (11Z,14Z)-3-oxoicosa-11,14-dienoyl-CoA + CO2 + CoA. It carries out the reaction (6Z,9Z,12Z,15Z)-octadecatetraenoyl-CoA + malonyl-CoA + H(+) = (8Z,11Z,14Z,17Z)-3-oxoicosatetraenoyl-CoA + CO2 + CoA. The enzyme catalyses (5Z,8Z,11Z,14Z)-eicosatetraenoyl-CoA + malonyl-CoA + H(+) = (7Z,10Z,13Z,16Z)-3-oxodocosatetraenoyl-CoA + CO2 + CoA. It catalyses the reaction (5Z,8Z,11Z,14Z,17Z)-eicosapentaenoyl-CoA + malonyl-CoA + H(+) = 3-oxo-(7Z,10Z,13Z,16Z,19Z)-docosapentaenoyl-CoA + CO2 + CoA. It functions in the pathway lipid metabolism; polyunsaturated fatty acid biosynthesis. In terms of biological role, catalyzes the first and rate-limiting reaction of the four reactions that constitute the long-chain fatty acids elongation cycle. This endoplasmic reticulum-bound enzymatic process allows the addition of 2 carbons to the chain of long- and very long-chain fatty acids (VLCFAs) per cycle. Condensing enzyme that acts specifically toward polyunsaturated acyl-CoA with the higher activity toward C18:3(n-6) acyl-CoA. May participate in the production of monounsaturated and of polyunsaturated VLCFAs of different chain lengths that are involved in multiple biological processes as precursors of membrane lipids and lipid mediators. In conditions where the essential linoleic and alpha linoleic fatty acids are lacking it is also involved in the synthesis of Mead acid from oleic acid. The protein is Very long chain fatty acid elongase 5 of Tachysurus fulvidraco (Yellow catfish).